Reading from the N-terminus, the 151-residue chain is UPF0756 membrane protein GK2737 (151 aa).

The next 4 membrane-spanning stretches (helical) occupy residues 5-25 (VLFLLLLLALGFLAKNKSLIV), 53-73 (WGVTVITIAVLAPIASGEIGF), 79-99 (SLQSLSAWVALASGIFVALIA), and 121-141 (ILAVSLFHGVAVGPLIGAGIA).

It belongs to the UPF0756 family.

It is found in the cell membrane. The chain is UPF0756 membrane protein GK2737 from Geobacillus kaustophilus (strain HTA426).